Consider the following 152-residue polypeptide: uncharacterized protein (152 aa).

5 helical membrane passes run 2–22 (GVVFAFGFYLIFIKLTGLKLM), 33–53 (LKMIFSILSVILAFLINWLIM), 58–78 (FLIEIIHPIASVWIFIILIYL), 97–117 (FMGNMSAIAIFLELLKIIEYV), and 122–142 (IASPITVALVFFIPVVVFFNC).

The protein localises to the cell membrane. This is an uncharacterized protein from Methanocaldococcus jannaschii (strain ATCC 43067 / DSM 2661 / JAL-1 / JCM 10045 / NBRC 100440) (Methanococcus jannaschii).